The sequence spans 463 residues: Retinoic acid receptor RXR-gamma (463 aa).

Residues 1 to 138 (MYGNYSHFMK…TSPGSLVKHI (138 aa)) form a modulating region. Residues 16–53 (GGSPGHTGSTSMSPSVALPTGKPMDSHPSYTDTPVSAP) are disordered. 2 NR C4-type zinc fingers span residues 139 to 159 (CAIC…CEGC) and 175 to 199 (CRDN…YQKC). The segment at residues 139–204 (CAICGDRSSG…RYQKCLVMGM (66 aa)) is a DNA-binding region (nuclear receptor). The hinge stretch occupies residues 205–230 (KREAVQEERQRSRERAESEAECASTG). The 229-residue stretch at 231–459 (HEDMPVERIL…TFLMEMLETP (229 aa)) folds into the NR LBD domain.

The protein belongs to the nuclear hormone receptor family. NR2 subfamily. Homodimer. Heterodimer with a RAR molecule. Binds DNA preferentially as a RAR/RXR heterodimer. Interacts with RARA. Acetylated by EP300. As to expression, expressed in the liver, but not detected in the adrenal gland (at protein level). Restricted expression in adrenal gland, kidney, liver, brain and lungs. Strong expression in heart and muscles.

Its subcellular location is the nucleus. The protein localises to the cytoplasm. In terms of biological role, receptor for retinoic acid. Retinoic acid receptors bind as heterodimers to their target response elements in response to their ligands, all-trans or 9-cis retinoic acid, and regulate gene expression in various biological processes. The RAR/RXR heterodimers bind to the retinoic acid response elements (RARE) composed of tandem 5'-AGGTCA-3' sites known as DR1-DR5. The high affinity ligand for RXRs is 9-cis retinoic acid. This is Retinoic acid receptor RXR-gamma (Rxrg) from Rattus norvegicus (Rat).